Consider the following 126-residue polypeptide: Glycine cleavage system H protein (126 aa).

Residues 20–102 (IGTIGITDYA…LGDGWFFKVR (83 aa)) form the Lipoyl-binding domain. The residue at position 61 (Lys-61) is an N6-lipoyllysine.

Belongs to the GcvH family. In terms of assembly, the glycine cleavage system is composed of four proteins: P, T, L and H. Requires (R)-lipoate as cofactor.

Functionally, the glycine cleavage system catalyzes the degradation of glycine. The H protein shuttles the methylamine group of glycine from the P protein to the T protein. The chain is Glycine cleavage system H protein from Rhodospirillum rubrum (strain ATCC 11170 / ATH 1.1.1 / DSM 467 / LMG 4362 / NCIMB 8255 / S1).